The sequence spans 279 residues: ATP-dependent Clp protease proteolytic subunit-related protein 2, chloroplastic (279 aa).

The N-terminal 54 residues, 1-54 (MAVSFNTTLHQPSLSPSCSIKLYSGLKPQSASFLASGYQNLNKEFYGRVYKSLQ), are a transit peptide targeting the chloroplast.

Belongs to the peptidase S14 family. In terms of assembly, component of the chloroplastic Clp protease core complex which consist of at least 16 proteins: CLPP4 (3 copies), CLPP5 (3 copies), CLPR4 (2 copies), ClpP1 (1 copy), CLPP6 (1 copy), CLPR2 (1 copy), CLPT1 (1 copy), CLPT2 (1 copy) and 3 copies of CLPP3 and/or CLPR1 and/or CLPR3. The core complex is organized in two heptameric rings, one containing CLPP3,4,5,6 in a 1:2:3:1 ratio and the other CLPP1 and CLPR1,2,3,4 in a 3:1:1:1:1 ratio. Expressed at least in leaves and roots.

The protein resides in the plastid. It localises to the chloroplast. Required for chloroplast development and integrity. Involved in the regulation of plastoglobules formation. The polypeptide is ATP-dependent Clp protease proteolytic subunit-related protein 2, chloroplastic (Arabidopsis thaliana (Mouse-ear cress)).